The chain runs to 447 residues: MTSVSPSPPASRSGSMCSDLPSSLQTEKLAHIIGLDADDEVLRRVTKQLSRSRRIACLTGAGISCNAGIPDFRSSDGLYDLVKKDCSQYWSIKSGREMFDISLFRDDFKISIFAKFMERLYSNVQLAKPTKTHKFIAHLKDRNKLLRCYTQNIDGLEESIGLTLSNRKLPLTSFSSHWKNLDVVQLHGDLKTLSCTKCFQTFPWSRYWSRCLRRGELPLCPDCEALINKRLNEGKRTLGSNVGILRPNIVLYGENHPSCEIITQGLNLDIIKGNPDFLIIMGTSLKVDGVKQLVKKLSKKIHDRGGLIILVNKTPIGESSWHGIIDYQIHSDCDNWVTFLESQIPDFFKTQDQIKKLRQLKREASDLRKQMKAQKDSIGTPPTTPLRTAQGIDIQGNNELNTKIKSLNTVKRKILSPENSSEEDEEENLDTRKRAKIRPTFGDNQAS.

The tract at residues M1–P21 is disordered. The Deacetylase sirtuin-type domain occupies L35–E363. Residues G60–Y79 and Q151–D154 contribute to the NAD(+) site. The Proton acceptor role is filled by H187. Residues C195, C198, C220, and C223 each coordinate Zn(2+). NAD(+) is bound by residues G282–S284, N312–T314, and C333. Residues S365–K375 show a composition bias toward basic and acidic residues. Disordered regions lie at residues S365 to D393 and K411 to S447.

The protein belongs to the sirtuin family. Class I subfamily. It depends on Zn(2+) as a cofactor.

Its subcellular location is the cytoplasm. It is found in the nucleus. It catalyses the reaction N(6)-acetyl-L-lysyl-[protein] + NAD(+) + H2O = 2''-O-acetyl-ADP-D-ribose + nicotinamide + L-lysyl-[protein]. In terms of biological role, NAD-dependent histone deacetylase, which contributes together with HST4 to histone H3 'Lys-56' deacetylation, regulation of telomeric silencing, proper cell cycle progression, DNA damage control, DNA recombination, and genomic maintenance. This Saccharomyces cerevisiae (strain ATCC 204508 / S288c) (Baker's yeast) protein is NAD-dependent histone deacetylase HST3 (HST3).